Here is a 217-residue protein sequence, read N- to C-terminus: Protein-L-isoaspartate O-methyltransferase (217 aa).

Residue Ser59 is part of the active site.

It belongs to the methyltransferase superfamily. L-isoaspartyl/D-aspartyl protein methyltransferase family.

The protein localises to the cytoplasm. The catalysed reaction is [protein]-L-isoaspartate + S-adenosyl-L-methionine = [protein]-L-isoaspartate alpha-methyl ester + S-adenosyl-L-homocysteine. Functionally, catalyzes the methyl esterification of L-isoaspartyl residues in peptides and proteins that result from spontaneous decomposition of normal L-aspartyl and L-asparaginyl residues. It plays a role in the repair and/or degradation of damaged proteins. This chain is Protein-L-isoaspartate O-methyltransferase (pcm), found in Methanothermobacter thermautotrophicus (strain ATCC 29096 / DSM 1053 / JCM 10044 / NBRC 100330 / Delta H) (Methanobacterium thermoautotrophicum).